We begin with the raw amino-acid sequence, 336 residues long: Probable tRNA pseudouridine synthase B (336 aa).

The Nucleophile role is filled by Asp81. The PUA domain maps to 248-323; sequence LKKVVVKDSA…VAVDVERVYM (76 aa).

The protein belongs to the pseudouridine synthase TruB family. Type 2 subfamily.

It catalyses the reaction uridine(55) in tRNA = pseudouridine(55) in tRNA. Functionally, could be responsible for synthesis of pseudouridine from uracil-55 in the psi GC loop of transfer RNAs. This is Probable tRNA pseudouridine synthase B from Methanocaldococcus jannaschii (strain ATCC 43067 / DSM 2661 / JAL-1 / JCM 10045 / NBRC 100440) (Methanococcus jannaschii).